The chain runs to 98 residues: DNA-directed RNA polymerase subunit omega (98 aa).

Belongs to the RNA polymerase subunit omega family. As to quaternary structure, the RNAP catalytic core consists of 2 alpha, 1 beta, 1 beta' and 1 omega subunit. When a sigma factor is associated with the core the holoenzyme is formed, which can initiate transcription.

The catalysed reaction is RNA(n) + a ribonucleoside 5'-triphosphate = RNA(n+1) + diphosphate. Functionally, promotes RNA polymerase assembly. Latches the N- and C-terminal regions of the beta' subunit thereby facilitating its interaction with the beta and alpha subunits. This chain is DNA-directed RNA polymerase subunit omega, found in Tropheryma whipplei (strain Twist) (Whipple's bacillus).